Consider the following 405-residue polypeptide: Aspartokinase (405 aa).

An ATP-binding site is contributed by 7–10 (KYGG). 25–30 (RIAHYR) contacts substrate. S41 serves as a coordination point for ATP. Substrate-binding positions include 47 to 49 (TDE), E74, 125 to 126 (LE), 150 to 153 (RGGS), and S153. ATP contacts are provided by residues 173–174 (TD), 179–184 (YTTDPH), and R209. ACT domains are found at residues 263–342 (IGLI…IAKV) and 344–405 (IVGV…LDKA). Substrate contacts are provided by residues D270, 288-290 (AVD), Q294, 355-356 (VP), 369-370 (NI), and 376-377 (SE).

It belongs to the aspartokinase family. As to quaternary structure, tetramer consisting of 2 isoforms Alpha (catalytic and regulation) and of a homodimer of 2 isoforms Beta (regulation).

The enzyme catalyses L-aspartate + ATP = 4-phospho-L-aspartate + ADP. It functions in the pathway amino-acid biosynthesis; L-lysine biosynthesis via DAP pathway; (S)-tetrahydrodipicolinate from L-aspartate: step 1/4. It participates in amino-acid biosynthesis; L-methionine biosynthesis via de novo pathway; L-homoserine from L-aspartate: step 1/3. The protein operates within amino-acid biosynthesis; L-threonine biosynthesis; L-threonine from L-aspartate: step 1/5. In terms of biological role, catalyzes the phosphorylation of the beta-carboxyl group of aspartic acid with ATP to yield 4-phospho-L-aspartate, which is involved in the branched biosynthetic pathway leading to the biosynthesis of amino acids lysine, threonine, isoleucine and methionine. This is Aspartokinase (ask) from Thermus thermophilus (strain ATCC BAA-163 / DSM 7039 / HB27).